The chain runs to 275 residues: Large ribosomal subunit protein uL2 (275 aa).

The disordered stretch occupies residues 224–275 (AMNPVDHPHGGGEGKAPIGHPGPLTPWGKPALGYKTRKKGKASDKFIIRRRK). Basic and acidic residues predominate over residues 264–275 (KASDKFIIRRRK).

It belongs to the universal ribosomal protein uL2 family. Part of the 50S ribosomal subunit. Forms a bridge to the 30S subunit in the 70S ribosome.

One of the primary rRNA binding proteins. Required for association of the 30S and 50S subunits to form the 70S ribosome, for tRNA binding and peptide bond formation. It has been suggested to have peptidyltransferase activity; this is somewhat controversial. Makes several contacts with the 16S rRNA in the 70S ribosome. This Thermoanaerobacter pseudethanolicus (strain ATCC 33223 / 39E) (Clostridium thermohydrosulfuricum) protein is Large ribosomal subunit protein uL2.